We begin with the raw amino-acid sequence, 75 residues long: Endogenous retrovirus group K member 10 Np9 protein (75 aa).

The tract at residues 21–43 (PTAPKRQRPSRTGHDDDGGFVEK) is disordered. Basic and acidic residues predominate over residues 32-43 (TGHDDDGGFVEK).

It is found in the nucleus. In terms of biological role, may possess a function in tumorigenesis. This is Endogenous retrovirus group K member 10 Np9 protein (ERVK-10) from Homo sapiens (Human).